The primary structure comprises 543 residues: Mitochondrial distribution and morphology protein 34 (543 aa).

The 202-residue stretch at 1–202 (MSFNVNWNSL…LPTLLHKVSL (202 aa)) folds into the SMP-LTD domain. The disordered stretch occupies residues 519–543 (AFSHNDPSITPFELPPPPYHQLSRA).

The protein belongs to the MDM34 family. As to quaternary structure, component of the ER-mitochondria encounter structure (ERMES) or MDM complex, composed of MMM1, MDM10, MDM12 and MDM34.

The protein resides in the mitochondrion outer membrane. Its function is as follows. Component of the ERMES/MDM complex, which serves as a molecular tether to connect the endoplasmic reticulum (ER) and mitochondria. Components of this complex are involved in the control of mitochondrial shape and protein biogenesis, and function in nonvesicular lipid trafficking between the ER and mitochondria. MDM34 is required for the interaction of the ER-resident membrane protein MMM1 and the outer mitochondrial membrane-resident beta-barrel protein MDM10. The chain is Mitochondrial distribution and morphology protein 34 from Clavispora lusitaniae (strain ATCC 42720) (Yeast).